The following is a 126-amino-acid chain: Large ribosomal subunit protein eL8 (126 aa).

The protein belongs to the eukaryotic ribosomal protein eL8 family. Part of the 50S ribosomal subunit. Probably part of the RNase P complex.

The protein resides in the cytoplasm. In terms of biological role, multifunctional RNA-binding protein that recognizes the K-turn motif in ribosomal RNA, the RNA component of RNase P, box H/ACA, box C/D and box C'/D' sRNAs. This chain is Large ribosomal subunit protein eL8, found in Sulfolobus acidocaldarius (strain ATCC 33909 / DSM 639 / JCM 8929 / NBRC 15157 / NCIMB 11770).